A 308-amino-acid chain; its full sequence is Transcription factor zip-2 (308 aa).

Polar residues predominate over residues 217-229; that stretch reads QSSSSSTVETTIT. Residues 217 to 277 form a disordered region; it reads QSSSSSTVET…RESKEERERL (61 aa). In terms of domain architecture, bZIP spans 242-305; that stretch reads SSDYRHKRDK…EDYKRLVMMF (64 aa). A basic motif region spans residues 246–276; it reads RHKRDKNNLASQKSRQKRQAKIRESKEERER. Over residues 266 to 277 the composition is skewed to basic and acidic residues; that stretch reads KIRESKEERERL. Positions 277 to 291 are leucine-zipper; sequence LEKRKVQLQAMVLTL.

This sequence belongs to the bZIP family. C/EBP subfamily. Expressed in the pharynx and throughout the intestine.

The protein localises to the nucleus. Its function is as follows. Transcription factor that binds to the promoter and the enhancer regions of target genes. May act together with the bZIP transcription factor, cebp-2. Involved in responding to mitochondrial damage. Plays a role in the delay of age-associated mitochondrial fragmentation and muscle decline. Has a protective role in response to infection by the Gram-negative bacterium P.aeruginosa. Required to prevent P.aeruginosa ToxA-mediated lethality. Required for the activation of several infection response genes including irg-1 and irg-2 following P.aeruginosa infection; target gene activation may involve effects of the bacterial toxin, ToxA, and perhaps other toxins. The polypeptide is Transcription factor zip-2 (Caenorhabditis elegans).